The sequence spans 263 residues: Acetylglutamate kinase (263 aa).

Substrate-binding positions include 48 to 49 (GG), Arg-70, and Asn-162.

Belongs to the acetylglutamate kinase family. ArgB subfamily.

Its subcellular location is the cytoplasm. The enzyme catalyses N-acetyl-L-glutamate + ATP = N-acetyl-L-glutamyl 5-phosphate + ADP. It functions in the pathway amino-acid biosynthesis; L-arginine biosynthesis; N(2)-acetyl-L-ornithine from L-glutamate: step 2/4. Catalyzes the ATP-dependent phosphorylation of N-acetyl-L-glutamate. This Shewanella sediminis (strain HAW-EB3) protein is Acetylglutamate kinase.